The sequence spans 499 residues: Terpentedienyl-diphosphate synthase (499 aa).

The Mg(2+) site is built by Asp-284 and Asp-286. A DXDD motif motif is present at residues 284 to 287 (DGDD).

Belongs to the terpene synthase family. In terms of assembly, monomer. The cofactor is Mg(2+).

It carries out the reaction (2E,6E,10E)-geranylgeranyl diphosphate = terpentedienyl diphosphate. It participates in antibiotic biosynthesis. Its function is as follows. Involved in the production of the isoprenoid antibiotic terpentecin. Converts geranylgeranyl diphosphate (GGDP) into terpentedienol diphosphate (TDP) by a protonation-initiated cyclization. The polypeptide is Terpentedienyl-diphosphate synthase (cyc1) (Kitasatospora griseola (Streptomyces griseolosporeus)).